The sequence spans 243 residues: Large ribosomal subunit protein uL3 (243 aa).

2 disordered regions span residues 139-164 (VSHR…KMPG) and 218-243 (KPGK…QEGV). Gln-151 carries the post-translational modification N5-methylglutamine. Residues 231–243 (QTAAAPAAEQEGV) are compositionally biased toward low complexity.

This sequence belongs to the universal ribosomal protein uL3 family. In terms of assembly, part of the 50S ribosomal subunit. Forms a cluster with proteins L14 and L19. In terms of processing, methylated by PrmB.

One of the primary rRNA binding proteins, it binds directly near the 3'-end of the 23S rRNA, where it nucleates assembly of the 50S subunit. This is Large ribosomal subunit protein uL3 from Rhodopseudomonas palustris (strain BisB18).